The chain runs to 90 residues: Antitoxin epsilon (90 aa).

The protein belongs to the epsilon antitoxin family. In terms of assembly, in the presence of the zeta toxin, forms an inactive PezA(2)PezT(2) heterotetramer. The heterotetramer is still able to bind the zeta toxin substrate UNAG.

Functionally, antitoxin component of a type II toxin-antitoxin (TA) system. Neutralizes the toxic effect of cognate zeta toxin. Part of a postsegregational killing (PSK) system involved in the killing of plasmid-free cells. Continuous synthesis of the epsilon antitoxin is required to counteract the zeta toxin. This Streptococcus pyogenes protein is Antitoxin epsilon.